The sequence spans 98 residues: Large ribosomal subunit protein eL21 (98 aa).

A disordered region spans residues 1–24 (MVKMSHGPRSGSRRKLTKSAEERK).

The protein belongs to the eukaryotic ribosomal protein eL21 family.

This is Large ribosomal subunit protein eL21 (rpl21e) from Thermoplasma acidophilum (strain ATCC 25905 / DSM 1728 / JCM 9062 / NBRC 15155 / AMRC-C165).